An 809-amino-acid polypeptide reads, in one-letter code: Cyclic nucleotide-gated channel beta-3 (809 aa).

2 disordered regions span residues 1 to 121 (MFKS…PPAA) and 153 to 178 (GDLS…ESDD). Topologically, residues 1–218 (MFKSLTKVNK…SIDSYTDRLY (218 aa)) are cytoplasmic. Over residues 22–31 (QSSRRNEEGS) the composition is skewed to basic and acidic residues. The span at 32-43 (HPSNQSQQTTAQ) shows a compositional bias: polar residues. The segment covering 44-53 (EENKGEEKSL) has biased composition (basic and acidic residues). Over residues 55 to 88 (TKSTPVTSEEPHTNIQDKLSKKNSSGDLTTNPDP) the composition is skewed to polar residues. Residues 219 to 242 (LLWLLLVTLAYNWNCCFIPLRLVF) form a helical membrane-spanning segment. Residues 243 to 249 (PYQTADN) lie on the Extracellular side of the membrane. A helical membrane pass occupies residues 250–270 (IHYWLIADIICDIIYLYDMLF). The Cytoplasmic portion of the chain corresponds to 271 to 299 (IQPRLQFVRGGDIIVDSNELRKHYRTSTK). The chain crosses the membrane as a helical span at residues 300 to 317 (FQLDVASIIPFDICYLFF). Over 318–320 (GFN) the chain is Extracellular. A helical transmembrane segment spans residues 321–335 (PMFRANRMLKYTSFF). Residues 336–348 (EFNHHLESIMDKA) lie on the Cytoplasmic side of the membrane. The segment at 348 to 447 (AYIYRVIRTT…IGQMRDVIGA (100 aa)) is ion conduction pathway. The helical transmembrane segment at 349–371 (YIYRVIRTTGYLLFILHINACVY) threads the bilayer. Topologically, residues 372 to 393 (YWASNYEGIGTTRWVYDGEGNE) are extracellular. Transmembrane regions (helical) follow at residues 394–420 (YLRC…LFEI) and 421–445 (VFQL…RDVI). The segment at 407–410 (TIGG) is selectivity filter. Residues 446–809 (GAATANQNYF…TIEVKEKAKQ (364 aa)) are Cytoplasmic-facing. Residues 450 to 526 (ANQNYFRACM…SIISKVDLFK (77 aa)) are C-linker. The segment at 530–646 (TQMIYDMLLR…ILMKKARVLL (117 aa)) is cyclic nucleotide-binding domain. Residues Gly-591, Glu-592, Arg-604, and Thr-605 each contribute to the 3',5'-cyclic GMP site. Residues 698–776 (QAAQKKENSE…PHSVRRTVLP (79 aa)) form a disordered region. The span at 716 to 755 (NEDKQKENEDKQKENEDKGKENEDKDKGREPEEKPLDRPE) shows a compositional bias: basic and acidic residues.

The protein belongs to the cyclic nucleotide-gated cation channel (TC 1.A.1.5) family. CNGB3 subfamily. Forms heterotetrameric channels composed of CNGA3 and CNGB3 subunits with 3:1 stoichiometry. In terms of tissue distribution, expressed specifically in the retina.

It localises to the cell membrane. The catalysed reaction is Ca(2+)(in) = Ca(2+)(out). It catalyses the reaction Na(+)(in) = Na(+)(out). It carries out the reaction K(+)(in) = K(+)(out). The enzyme catalyses NH4(+)(in) = NH4(+)(out). The catalysed reaction is Rb(+)(in) = Rb(+)(out). It catalyses the reaction Li(+)(in) = Li(+)(out). It carries out the reaction Cs(+)(in) = Cs(+)(out). Pore-forming subunit of the cone cyclic nucleotide-gated channel. Mediates cone photoresponses at bright light converting transient changes in intracellular cGMP levels into electrical signals. In the dark, cGMP levels are high and keep the channel open enabling a steady inward current carried by Na(+) and Ca(2+) ions that leads to membrane depolarization and neurotransmitter release from synaptic terminals. Upon photon absorption cGMP levels decline leading to channel closure and membrane hyperpolarization that ultimately slows neurotransmitter release and signals the presence of light, the end point of the phototransduction cascade. Conducts cGMP- and cAMP-gated ion currents, with permeability for monovalent and divalent cations. The protein is Cyclic nucleotide-gated channel beta-3 of Homo sapiens (Human).